A 556-amino-acid polypeptide reads, in one-letter code: 2-succinyl-5-enolpyruvyl-6-hydroxy-3-cyclohexene-1-carboxylate synthase (556 aa).

It belongs to the TPP enzyme family. MenD subfamily. Homodimer. Requires Mg(2+) as cofactor. The cofactor is Mn(2+). Thiamine diphosphate is required as a cofactor.

It carries out the reaction isochorismate + 2-oxoglutarate + H(+) = 5-enolpyruvoyl-6-hydroxy-2-succinyl-cyclohex-3-ene-1-carboxylate + CO2. It participates in quinol/quinone metabolism; 1,4-dihydroxy-2-naphthoate biosynthesis; 1,4-dihydroxy-2-naphthoate from chorismate: step 2/7. The protein operates within quinol/quinone metabolism; menaquinone biosynthesis. Its function is as follows. Catalyzes the thiamine diphosphate-dependent decarboxylation of 2-oxoglutarate and the subsequent addition of the resulting succinic semialdehyde-thiamine pyrophosphate anion to isochorismate to yield 2-succinyl-5-enolpyruvyl-6-hydroxy-3-cyclohexene-1-carboxylate (SEPHCHC). The sequence is that of 2-succinyl-5-enolpyruvyl-6-hydroxy-3-cyclohexene-1-carboxylate synthase from Salmonella typhi.